The sequence spans 217 residues: Large ribosomal subunit protein uL4 (217 aa).

It belongs to the universal ribosomal protein uL4 family. In terms of assembly, part of the 50S ribosomal subunit.

Its function is as follows. One of the primary rRNA binding proteins, this protein initially binds near the 5'-end of the 23S rRNA. It is important during the early stages of 50S assembly. It makes multiple contacts with different domains of the 23S rRNA in the assembled 50S subunit and ribosome. Forms part of the polypeptide exit tunnel. This is Large ribosomal subunit protein uL4 from Koribacter versatilis (strain Ellin345).